We begin with the raw amino-acid sequence, 465 residues long: MLDYIPWIGNGHRYGNDHRGSNSSTSGVTTQGQQSQNASGTEPASTFSNVGVGLKANVQGTLGGSQTTTTGKDIPKWPTLDQANLQLWTGAGWRNDKASSGQSDENHTKFTSATGSGQQGSSSGTTNSAGNPDSLKQDKVDKSGDSVTVAETTSGDNLTNYTNLPPNLTPTADWPNALSFTNKNNAQRAQLFLRALLGSIPVLVNKSGQDDSNKFQATDQKWSYTELKSDQTKLNLPAYGEVNGLLNPALVEVYGLSSTQGSSTGAGGAGGNTGGDTNTQTYARPGIGFKLPSTDSESSKATLITPGLAWTAQDVGNLVVSGTSLSFQLGGWLVTFTDFIKPRSGYLGLQLTGLDANDSDQRELIWAPPALNRLSWQLGQPLGPRGECVGFQGGVGGSSSVRLASSYKYHHRNEGYLIGAHQCFGLSGELYRPGFVQGFHSKLRPKPKHLPLPALGAGEKSRFLW.

3 disordered regions span residues 9 to 48 (GNGH…STFS), 59 to 78 (QGTL…PKWP), and 93 to 167 (WRND…LPPN). The segment covering 21–37 (SNSSTSGVTTQGQQSQN) has biased composition (low complexity). Residues 38–48 (ASGTEPASTFS) are compositionally biased toward polar residues. The segment covering 111–131 (TSATGSGQQGSSSGTTNSAGN) has biased composition (low complexity). The span at 135–144 (LKQDKVDKSG) shows a compositional bias: basic and acidic residues. Positions 145–156 (DSVTVAETTSGD) are enriched in polar residues. Over residues 157–167 (NLTNYTNLPPN) the composition is skewed to low complexity.

The protein belongs to the adhesin P1 family.

The protein is Putative adhesin P1-like protein MPN_286 of Mycoplasma pneumoniae (strain ATCC 29342 / M129 / Subtype 1) (Mycoplasmoides pneumoniae).